Here is a 900-residue protein sequence, read N- to C-terminus: Isoleucine--tRNA ligase (900 aa).

Residues Pro58–His68 carry the 'HIGH' region motif. Glu550 serves as a coordination point for L-isoleucyl-5'-AMP. Positions Lys591–Ser595 match the 'KMSKS' region motif. An ATP-binding site is contributed by Lys594. Zn(2+)-binding residues include Cys871, Cys874, Cys888, and Cys891.

Belongs to the class-I aminoacyl-tRNA synthetase family. IleS type 1 subfamily. As to quaternary structure, monomer. It depends on Zn(2+) as a cofactor.

The protein localises to the cytoplasm. It catalyses the reaction tRNA(Ile) + L-isoleucine + ATP = L-isoleucyl-tRNA(Ile) + AMP + diphosphate. Functionally, catalyzes the attachment of isoleucine to tRNA(Ile). As IleRS can inadvertently accommodate and process structurally similar amino acids such as valine, to avoid such errors it has two additional distinct tRNA(Ile)-dependent editing activities. One activity is designated as 'pretransfer' editing and involves the hydrolysis of activated Val-AMP. The other activity is designated 'posttransfer' editing and involves deacylation of mischarged Val-tRNA(Ile). This Malacoplasma penetrans (strain HF-2) (Mycoplasma penetrans) protein is Isoleucine--tRNA ligase.